A 2531-amino-acid chain; its full sequence is MLSMLQEKRPLKRTRLGPPDIYPQDAKQREDELTPTNVKHGFTTTPPLSDEFGTAHNSNVNASKVSAFFSGVLAKKEELMTLPDTGRKKQQINCKDNFWPVSPRRKCTVDAWFKDLAGNKPLLSLAKRAPSFNKKEEIFITLCENQVNMQRATWFIKLSAAYTLSFTESKNKKRSIYDPAAEWTGNMIKFMKELLPKLQEYYQQNHDKSSSNGTTSGSLTAAGNGPASNGSTGTSSINSVTGSSASTNVIPVPSMASPLPPIHSPANGQQAAPGGGVNAGSVMPTTGSLGGVVGGPGSSVVGGAAGAGAAVPPGSTISGIGSQFEDSRNALKYWKYCHQLSKYMYEESLLDRQEFLNWILDLLDKMRTQASFDEPLKKLVLSFALQYMHDFVQSERLCRKMAYIVSKKLAQLLNTVVEQQTIKELDEPKLQQDPYELALQEQMSCPHHRDIVLYLSTILQIITIECPTALVWSGIAAHRAPSSLLGSPLDHLPLAPSVLPMPTRCPRTNHEIRRQLRAAESDIVLRTQHAEQRWFAAKWLSAGKNQYTSVLATLDHLDTHCFDRMEHNNSIDTLYAQIFPSPTVSRRREEDQVEPRPPYEPKQDKDTVRILCEWAVSGQRWGEHRAMVVAILLDKRQIDVTSTPADQQSSDKDDKDSLASGAGLIDGLPVFQHVLMHFLDHDAPVLDEHVSSPQQRTEFTNLVQLFSALIRHDVFSHNAYMHTLISRGDLLLESVLVIKSGTTATKTSPPPPAPPPTTTHGFDDDGFGGGLDFKHNEFDDSNVDDDLDKLVQNIKEKGQQHEAPDSPKIGPPGDGETNPGGSISRHYVYTKHFPIPQDDPSMSSYSSESNQRYILLFGVGKERDEKKHAVKKMSKEIGKLFTKKFSIDVAAAGHVKKHSRNEFNFEATTSKCQQMAYFDQHVVTAQCAANVLEQLNGFALGNNNYLPVQEHVAFLFDLMELALNIYSLLELCDSLLKELPEVEHQLQLKKSNLVRSYTTSLALYIVSILRRYHSCLLLSPEQTLSVFEGVCRTIRHVSNPSECTSAERCIIAYLSDLHESCVLLQGKEQSTEYYQQLQCIKRFKDIFNTPEQLDLPPQGYNPLLLQELFMAPRRGGKLDPHWLGTLHESPANVYSFVSNALIAVCRETDNERLNDVALACAELTASCNVLSEEWIYALQSLCSGSKSPRYPHLGGQVDIGQLKTHNALAVFVCILVARHCFSLADFVSKFALPTLARSVSAGGAELSVDAEAGARLTCHLVLKLFKTLEIPQPGMYSVSTSPNPLHAVGNDFSIRLSCDRHLLVGAHKTIPIAAVLAVLKAILIVVDNAALKTPLASGSGTSSGGLGGAFGSGKRSGFNTPVHPGSTPKSNEQRPADLSQILGTSDLQLGSSLTSEPEALQQPSVGGMEQISLLEFAQAVLKQICAQEHVLERCLKNAEQLCDMIIDEMLTAKQAQRVLHMICYPEPEFNIISELDQRSMIVRILENLGQWTLRISWLDLQLMYRQSLSNNAELNVWLDTVARAAIDVFHMEEVVLPGAVKATHKPKPSTWLVAPLIAKLTPAVQGRILRVAGQVLESMNYFSKVSKSDCNSSGSGDEREKSNSCHSSNSYGLGGVPARNKKMPLDYQPFLGLILTCLKGQDEYKENLLVSLYAQLSQCLQSFAELDTIGGIDEPQAREEILDALQLRFSLVGGMFEAIQKNSTPTTDWAILLAQLVCQGVVDLSCNRELFTTVVDMLATLVHSTLVSDDERHYMNLMKKLKKEIGEKNNASIRVIRQLLPLYKQPTEVIACEHSGMDTKGNKICDIDKKQLRISDKQRISVWDILEGHKNPAPLSWVWFGAVKLERKPLTYEEAHRNLKYHTHSLVKPSSYYYEPLPLPPEDIEPVPEKICIKDEMKADTPSSVDQSPSAVVGGTGRGRGKGTTTRKRKPKNPKTPPVVNTQQQQPQLAQQPQQPQNVQQQQLQQQQQQQQHMQQQHMQQQQMQPNQMGQMPMNMPMNMQQFAPNPNNMMQQNAMLQQQQQQQMQQMGNNPMQQQLNVGGGNGQPNPQMNFMQQGPGGGGAGPQGMPGQQQQWHNAPQQQQPPQPYHNQYAPHQQNMQSNRIERPPLNANSKQALSQMLRQRQPFQQQAQQGPGGGFNPMQQQPQASQQQPGPQQQMNPNQMRQQQMNPQQNPQSVAAFNAMQQQPQQNAQQQQMNPNQQQQQQFMRGGNMRPGMAPNQMNQMNMGGQGMSQNPMMQQQIPQNMVGMVNPNANQMMQSGGAQGGNGVGVGVGVGVGGAGNNPNMGMGGMPQQGMIQQQPQQQPQQQVQFQNFQNQYQQQQQQGMQQQGGGAGVGVGVGMAPNQQQQQQANMMGNFNPQMQQGNRNNPDFMAAAAVAQQQQQQQQQQRVVPGGMMAGNRNQYMNQAPNVTMSTMMGPGPGGVVGQVPPYARQQSAGGGKPGVLNTQQQFQQQQQQQQQLRHQMMQLQGMGGGAGGGMGAGPQQGGGAVGGGAGGGMVPQQQSMNQQQTPNLVAQLQRQNMMGQQQYQPPPY.

Disordered regions lie at residues 1 to 41 (MLSM…VKHG), 204 to 283 (QNHD…GSVM), 584 to 604 (VSRR…PKQD), and 742 to 762 (TTAT…THGF). Residues 210-247 (SSNGTTSGSLTAAGNGPASNGSTGTSSINSVTGSSAST) show a composition bias toward low complexity. Residues 586–604 (RRREEDQVEPRPPYEPKQD) show a composition bias toward basic and acidic residues. The residue at position 745 (threonine 745) is a Phosphothreonine. Serine 748 and serine 781 each carry phosphoserine. Positions 748–757 (SPPPPAPPPT) are enriched in pro residues. The segment covering 796–805 (EKGQQHEAPD) has biased composition (basic and acidic residues). The disordered stretch occupies residues 796–824 (EKGQQHEAPDSPKIGPPGDGETNPGGSIS). Phosphoserine is present on residues serine 806 and serine 1356. Position 1360 is a phosphothreonine (threonine 1360). Polar residues-rich tracts occupy residues 1585–1595 (VSKSDCNSSGS) and 1901–1910 (TPSSVDQSPS). Disordered stretches follow at residues 1585 to 1608 (VSKS…CHSS), 1898 to 2092 (KADT…NQYA), 2114 to 2218 (QALS…GMAP), and 2469 to 2508 (MGGG…QQQT). Positions 1919-1933 (GRGKGTTTRKRKPKN) are enriched in basic residues. Composition is skewed to low complexity over residues 1938–2038 (PVVN…QQLN) and 2045–2055 (QPNPQMNFMQQ). Gly residues predominate over residues 2056 to 2066 (GPGGGGAGPQG). Low complexity-rich tracts occupy residues 2067–2080 (MPGQ…APQQ), 2121–2132 (RQRQPFQQQAQQ), and 2139–2205 (NPMQ…QQQQ). The segment covering 2469 to 2496 (MGGGAGGGMGAGPQQGGGAVGGGAGGGM) has biased composition (gly residues). The span at 2497–2507 (VPQQQSMNQQQ) shows a compositional bias: low complexity.

Belongs to the Mediator complex subunit 12 family. In terms of assembly, component of the Cdk8 module of the Mediator complex, composed of CycC, Cdk8, kto and skd.

The protein localises to the nucleus. Functionally, component of the Mediator complex, a coactivator involved in regulated gene transcription of nearly all RNA polymerase II-dependent genes. Mediator functions as a bridge to convey information from gene-specific regulatory proteins to the basal RNA polymerase II transcription machinery. Mediator is recruited to promoters by direct interactions with regulatory proteins and serves as a scaffold for the assembly of a functional preinitiation complex with RNA polymerase II and the general transcription factors. Required for leg and eye development and macrochaete specification or differentiation. This chain is Mediator of RNA polymerase II transcription subunit 12 (kto), found in Drosophila melanogaster (Fruit fly).